A 180-amino-acid polypeptide reads, in one-letter code: Putative manganese efflux pump MntP (180 aa).

A run of 6 helical transmembrane segments spans residues 6–26 (LFAL…GIGI), 34–54 (IALI…LGWY), 67–87 (ASIA…WDTI), 103–123 (GGLL…GFTL), 130–150 (LVLA…AGLT), and 159–179 (IGER…VKLF).

This sequence belongs to the MntP (TC 9.B.29) family.

The protein resides in the cell membrane. Probably functions as a manganese efflux pump. The chain is Putative manganese efflux pump MntP from Desulforamulus reducens (strain ATCC BAA-1160 / DSM 100696 / MI-1) (Desulfotomaculum reducens).